We begin with the raw amino-acid sequence, 304 residues long: uncharacterized protein (304 aa).

Residues 1 to 25 (MVKTAMLGAVALVIALGGTCGVADA) form the signal peptide. Positions 34–303 (PMIVAHRAGT…DSPLAAQQWR (270 aa)) constitute a GP-PDE domain.

This is an uncharacterized protein from Mycobacterium tuberculosis (strain CDC 1551 / Oshkosh).